The chain runs to 392 residues: F-box/kelch-repeat protein At4g39550 (392 aa).

Residues 1-12 show a composition bias toward basic residues; that stretch reads MSSPEKKRKTTK. Positions 1-27 are disordered; sequence MSSPEKKRKTTKKPSPTPQSTTPNPSL. Over residues 18-27 the composition is skewed to low complexity; it reads PQSTTPNPSL. An F-box domain is found at 21-67; the sequence is TTPNPSLPDDLVVSCLARVSRLYYPTLSLVSKSFRSLIASPDLYKTR. Kelch repeat units follow at residues 148 to 194, 195 to 242, and 244 to 285; these read NIYN…VVEG, KIYV…KSAV, and EGEI…VVEN.

Part of a SCF (ASK-cullin-F-box) protein ligase complex. Interacts with ASK13 and ASK14.

It participates in protein modification; protein ubiquitination. Functionally, component of SCF(ASK-cullin-F-box) E3 ubiquitin ligase complexes, which may mediate the ubiquitination and subsequent proteasomal degradation of target proteins. In Arabidopsis thaliana (Mouse-ear cress), this protein is F-box/kelch-repeat protein At4g39550.